The chain runs to 235 residues: Small ribosomal subunit protein uS5 (235 aa).

Residues 60-123 (ENQEVLDIAL…NYAKMNIIEI (64 aa)) enclose the S5 DRBM domain. The Zn(2+) site is built by C127, C132, C134, and H138.

The protein belongs to the universal ribosomal protein uS5 family. Part of the 30S ribosomal subunit. Contacts protein S4. Zn(2+) serves as cofactor.

Functionally, with S4 and S12 plays an important role in translational accuracy. The polypeptide is Small ribosomal subunit protein uS5 (Thermococcus kodakarensis (strain ATCC BAA-918 / JCM 12380 / KOD1) (Pyrococcus kodakaraensis (strain KOD1))).